The sequence spans 329 residues: Methionyl-tRNA formyltransferase (329 aa).

A (6S)-5,6,7,8-tetrahydrofolate-binding site is contributed by 117-120 (SLLP).

The protein belongs to the Fmt family.

The catalysed reaction is L-methionyl-tRNA(fMet) + (6R)-10-formyltetrahydrofolate = N-formyl-L-methionyl-tRNA(fMet) + (6S)-5,6,7,8-tetrahydrofolate + H(+). Functionally, attaches a formyl group to the free amino group of methionyl-tRNA(fMet). The formyl group appears to play a dual role in the initiator identity of N-formylmethionyl-tRNA by promoting its recognition by IF2 and preventing the misappropriation of this tRNA by the elongation apparatus. The sequence is that of Methionyl-tRNA formyltransferase from Paracidovorax citrulli (strain AAC00-1) (Acidovorax citrulli).